A 243-amino-acid polypeptide reads, in one-letter code: LexA repressor 2 (243 aa).

A DNA-binding region (H-T-H motif) is located at residues 48–68 (IREIGDAVGLTSTSSVAHQLR). Catalysis depends on for autocatalytic cleavage activity residues Ser-167 and Lys-204.

This sequence belongs to the peptidase S24 family. In terms of assembly, homodimer.

It carries out the reaction Hydrolysis of Ala-|-Gly bond in repressor LexA.. Functionally, represses a number of genes involved in the response to DNA damage (SOS response), including recA and lexA. In the presence of single-stranded DNA, RecA interacts with LexA causing an autocatalytic cleavage which disrupts the DNA-binding part of LexA, leading to derepression of the SOS regulon and eventually DNA repair. This Nocardia farcinica (strain IFM 10152) protein is LexA repressor 2.